The chain runs to 507 residues: Probable bifunctional methylthioribulose-1-phosphate dehydratase/enolase-phosphatase E1 (507 aa).

Ala2 is subject to N-acetylalanine. A methylthioribulose-1-phosphate dehydratase region spans residues Ala2–Asp237. Cys109 lines the substrate pocket. Zn(2+) contacts are provided by His127 and His129. Catalysis depends on Glu152, which acts as the Proton donor/acceptor. Position 202 (His202) interacts with Zn(2+). The interval Ile268 to Ile507 is enolase-phosphatase E1. Residues Asp271 and Glu273 each coordinate Mg(2+). Substrate-binding positions include Ser406–Ser407 and Lys440. Residue Asp466 coordinates Mg(2+).

The protein in the N-terminal section; belongs to the aldolase class II family. MtnB subfamily. It in the C-terminal section; belongs to the HAD-like hydrolase superfamily. MasA/MtnC family. Zn(2+) serves as cofactor. The cofactor is Mg(2+).

The enzyme catalyses 5-(methylsulfanyl)-D-ribulose 1-phosphate = 5-methylsulfanyl-2,3-dioxopentyl phosphate + H2O. It catalyses the reaction 5-methylsulfanyl-2,3-dioxopentyl phosphate + H2O = 1,2-dihydroxy-5-(methylsulfanyl)pent-1-en-3-one + phosphate. The protein operates within amino-acid biosynthesis; L-methionine biosynthesis via salvage pathway; L-methionine from S-methyl-5-thio-alpha-D-ribose 1-phosphate: step 2/6. Its pathway is amino-acid biosynthesis; L-methionine biosynthesis via salvage pathway; L-methionine from S-methyl-5-thio-alpha-D-ribose 1-phosphate: step 3/6. It functions in the pathway amino-acid biosynthesis; L-methionine biosynthesis via salvage pathway; L-methionine from S-methyl-5-thio-alpha-D-ribose 1-phosphate: step 4/6. The protein is Probable bifunctional methylthioribulose-1-phosphate dehydratase/enolase-phosphatase E1 of Arabidopsis thaliana (Mouse-ear cress).